Reading from the N-terminus, the 485-residue chain is Iroquois-class homeodomain protein IRX-4 (485 aa).

The segment at residues 142–203 (GTRRKNATRE…NARRRLKKEN (62 aa)) is a DNA-binding region (homeobox; TALE-type). A disordered region spans residues 206–313 (TWPPRNKCSD…EEEEAAERAR (108 aa)). Residues 221-232 (EEEEEEEEECSQ) are compositionally biased toward acidic residues. Over residues 234–253 (DAMKSEKAEEPTGKEEKELE) the composition is skewed to basic and acidic residues. Residues 254 to 269 (LSDLEDLDAAESESSE) are compositionally biased toward acidic residues. The span at 282-294 (HPLPGGGPPPRAA) shows a compositional bias: pro residues.

This sequence belongs to the TALE/IRO homeobox family. In terms of tissue distribution, ventricles of the heart, developing feather buds, retina, hindbrain.

Its subcellular location is the nucleus. Regulates the chamber-specific expression of myosin isoforms by activating the expression of the ventricle myosin heavy chain-1 (Vmhc1) and suppressing the expression of the atrial myosin heavy chain-1 (Amhc1) in the ventricles. May play a critical role in establishing chamber-specific gene expression in the developing heart. The chain is Iroquois-class homeodomain protein IRX-4 (IRX4) from Gallus gallus (Chicken).